The sequence spans 78 residues: uncharacterized protein (78 aa).

The tract at residues 49 to 78 is disordered; that stretch reads QRASLERSNSIRNLQSQGKRRSDSKESRKL. Positions 54–65 are enriched in polar residues; it reads ERSNSIRNLQSQ. Positions 68–78 are enriched in basic and acidic residues; that stretch reads RRSDSKESRKL.

This is an uncharacterized protein from Saccharomyces cerevisiae (strain ATCC 204508 / S288c) (Baker's yeast).